A 955-amino-acid chain; its full sequence is MSKTNKSKSGSRSSRSRSASRSRSRSFSKSRSRSRSLSRSRKRRLSSRSRSRSYSPAHNRERNHPRVYQNRDFRGHNRGYRRPYYFRGRNRGFYPWGQYNRGGYGNYRSNWQNYRQAYSPRRGRSRSRSPKRRSPSPRSRSHSRNSDKSSSDRSRRSSSSRSSSNHSRVESSKRKSAKEKKSSSKDSRPSQAAGDNQGDEAKEQTFSGGTSQDTKASESSKPWPDATYGTGSASRASAVSELSPRERSPALKSPLQSVVVRRRSPRPSPVPKPSPPLSSTSQMGSTLPSGAGYQSGTHQGQFDHGSGSLSPSKKSPVGKSPPSTGSTYGSSQKEESAASGGAAYTKRYLEEQKTENGKDKEQKQTNTDKEKIKEKGSFSDTGLGDGKMKSDSFAPKTDSEKPFRGSQSPKRYKLRDDFEKKMADFHKEEMDDQDKDKAKGRKESEFDDEPKFMSKVIGANKNQEEEKSGKWEGLVYAPPGKEKQRKTEELEEESFPERSKKEDRGKRSEGGHRGFVPEKNFRVTAYKAVQEKSSSPPPRKTSESRDKLGAKGDFPTGKSSFSITREAQVNVRMDSFDEDLARPSGLLAQERKLCRDLVHSNKKEQEFRSIFQHIQSAQSQRSPSELFAQHIVTIVHHVKEHHFGSSGMTLHERFTKYLKRGTEQEAAKNKKSPEIHRRIDISPSTFRKHGLAHDEMKSPREPGYKAEGKYKDDPVDLRLDIERRKKHKERDLKRGKSRESVDSRDSSHSRERSAEKTEKTHKGSKKQKKHRRARDRSRSSSSSSQSSHSYKAEEYTEETEEREESTTGFDKSRLGTKDFVGPSERGGGRARGTFQFRARGRGWGRGNYSGNNNNNSNNDFQKRNREEEWDPEYTPKSKKYYLHDDREGEGSDKWVSRGRGRGAFPRGRGRFMFRKSSTSPKWAHDKFSGEEGEIEDDESGTENREEKDNIQPTTE.

The interval 1-94 is disordered; it reads MSKTNKSKSG…YFRGRNRGFY (94 aa). At serine 2 the chain carries N-acetylserine. Residues 2 to 190 are required for mRNA splicing activation; sequence SKTNKSKSGS…KSSSKDSRPS (189 aa). A compositionally biased stretch (basic residues) spans 14 to 51; sequence SRSRSASRSRSRSFSKSRSRSRSLSRSRKRRLSSRSRS. Arginine 17 is subject to Dimethylated arginine. A compositionally biased stretch (basic and acidic residues) spans 58–75; the sequence is HNRERNHPRVYQNRDFRG. An Asymmetric dimethylarginine modification is found at arginine 66. Positions 82-94 are enriched in low complexity; sequence RPYYFRGRNRGFY. An asymmetric dimethylarginine mark is found at arginine 101 and arginine 108. The interval 117-559 is disordered; it reads AYSPRRGRSR…AKGDFPTGKS (443 aa). Positions 121–143 are enriched in basic residues; sequence RRGRSRSRSPKRRSPSPRSRSHS. A compositionally biased stretch (basic and acidic residues) spans 144–155; sequence RNSDKSSSDRSR. A compositionally biased stretch (low complexity) spans 157–166; it reads SSSSRSSSNH. Positions 167 to 188 are enriched in basic and acidic residues; sequence SRVESSKRKSAKEKKSSSKDSR. Lysine 202 participates in a covalent cross-link: Glycyl lysine isopeptide (Lys-Gly) (interchain with G-Cter in SUMO1); alternate. Lysine 202 is covalently cross-linked (Glycyl lysine isopeptide (Lys-Gly) (interchain with G-Cter in SUMO2); alternate). Polar residues predominate over residues 204 to 220; that stretch reads QTFSGGTSQDTKASESS. A Glycyl lysine isopeptide (Lys-Gly) (interchain with G-Cter in SUMO2) cross-link involves residue lysine 215. Phosphoserine is present on serine 220. Lysine 221 is covalently cross-linked (Glycyl lysine isopeptide (Lys-Gly) (interchain with G-Cter in SUMO2); alternate). At lysine 221 the chain carries N6-acetyllysine; alternate. 5 positions are modified to phosphoserine: serine 232, serine 237, serine 240, serine 243, and serine 248. A Glycyl lysine isopeptide (Lys-Gly) (interchain with G-Cter in SUMO2); alternate cross-link involves residue lysine 252. Lysine 252 is modified (N6-methyllysine; alternate). 2 positions are modified to phosphoserine: serine 253 and serine 257. The span at 266–276 shows a compositional bias: pro residues; sequence RPSPVPKPSPP. Residues 282–300 are compositionally biased toward polar residues; the sequence is QMGSTLPSGAGYQSGTHQG. The span at 305–331 shows a compositional bias: low complexity; that stretch reads GSGSLSPSKKSPVGKSPPSTGSTYGSS. Phosphoserine is present on residues serine 315, serine 320, and serine 323. At threonine 324 the chain carries Phosphothreonine. Serine 326 carries the post-translational modification Phosphoserine. A Phosphotyrosine modification is found at tyrosine 328. A Glycyl lysine isopeptide (Lys-Gly) (interchain with G-Cter in SUMO2) cross-link involves residue lysine 333. Serine 339 is modified (phosphoserine). Lysine 346 is covalently cross-linked (Glycyl lysine isopeptide (Lys-Gly) (interchain with G-Cter in SUMO2); alternate). Lysine 346 carries the post-translational modification N6-acetyllysine; alternate. The span at 347 to 377 shows a compositional bias: basic and acidic residues; it reads RYLEEQKTENGKDKEQKQTNTDKEKIKEKGS. Residues lysine 353 and lysine 375 each participate in a glycyl lysine isopeptide (Lys-Gly) (interchain with G-Cter in SUMO2) cross-link. Residues 359–955 are required for mRNA decay activity; that stretch reads DKEQKQTNTD…EKDNIQPTTE (597 aa). Phosphoserine is present on residues serine 377 and serine 379. Lysine 387 is covalently cross-linked (Glycyl lysine isopeptide (Lys-Gly) (interchain with G-Cter in SUMO1); alternate). Residue lysine 387 forms a Glycyl lysine isopeptide (Lys-Gly) (interchain with G-Cter in SUMO2); alternate linkage. Glycyl lysine isopeptide (Lys-Gly) (interchain with G-Cter in SUMO2) cross-links involve residues lysine 389 and lysine 396. Threonine 397 is subject to Phosphothreonine. Lysine 401 is covalently cross-linked (Glycyl lysine isopeptide (Lys-Gly) (interchain with G-Cter in SUMO2)). A phosphoserine mark is found at serine 406 and serine 408. Basic and acidic residues predominate over residues 414-452; the sequence is LRDDFEKKMADFHKEEMDDQDKDKAKGRKESEFDDEPKF. Glycyl lysine isopeptide (Lys-Gly) (interchain with G-Cter in SUMO2) cross-links involve residues lysine 421 and lysine 427. Serine 444 carries the phosphoserine modification. Lysine 451 participates in a covalent cross-link: Glycyl lysine isopeptide (Lys-Gly) (interchain with G-Cter in SUMO1); alternate. Residues lysine 451 and lysine 455 each participate in a glycyl lysine isopeptide (Lys-Gly) (interchain with G-Cter in SUMO2); alternate cross-link. The residue at position 455 (lysine 455) is an N6-acetyllysine; alternate. Residues lysine 461 and lysine 467 each participate in a glycyl lysine isopeptide (Lys-Gly) (interchain with G-Cter in SUMO2) cross-link. Serine 468 is subject to Phosphoserine. Residues lysine 470 and lysine 481 each participate in a glycyl lysine isopeptide (Lys-Gly) (interchain with G-Cter in SUMO2); alternate cross-link. N6-acetyllysine; alternate is present on residues lysine 470 and lysine 481. A Glycyl lysine isopeptide (Lys-Gly) (interchain with G-Cter in SUMO2) cross-link involves residue lysine 486. Residues 495 to 521 are compositionally biased toward basic and acidic residues; the sequence is FPERSKKEDRGKRSEGGHRGFVPEKNF. N6-acetyllysine is present on lysine 519. A Glycyl lysine isopeptide (Lys-Gly) (interchain with G-Cter in SUMO2); alternate cross-link involves residue lysine 527. Lysine 527 bears the N6-acetyllysine; alternate mark. Phosphoserine is present on serine 535. Positions 540 to 550 are enriched in basic and acidic residues; sequence KTSESRDKLGA. Residue lysine 551 forms a Glycyl lysine isopeptide (Lys-Gly) (interchain with G-Cter in SUMO2) linkage. 552 to 559 lines the ATP pocket; that stretch reads GDFPTGKS. Residue lysine 558 forms a Glycyl lysine isopeptide (Lys-Gly) (interchain with G-Cter in SUMO2); alternate linkage. Lysine 558 is modified (N6-acetyllysine; alternate). Phosphoserine occurs at positions 560, 562, and 575. Lysine 602 participates in a covalent cross-link: Glycyl lysine isopeptide (Lys-Gly) (interchain with G-Cter in SUMO2). Phosphoserine is present on residues serine 619, serine 622, serine 672, serine 682, and serine 684. Positions 663–680 are enriched in basic and acidic residues; the sequence is EQEAAKNKKSPEIHRRID. The disordered stretch occupies residues 663-955; it reads EQEAAKNKKS…EKDNIQPTTE (293 aa). Residues 691-761 are compositionally biased toward basic and acidic residues; the sequence is LAHDEMKSPR…RSAEKTEKTH (71 aa). Residue lysine 697 forms a Glycyl lysine isopeptide (Lys-Gly) (interchain with G-Cter in SUMO2) linkage. A Phosphoserine modification is found at serine 698. Residues lysine 705, lysine 709, lysine 711, lysine 756, and lysine 759 each participate in a glycyl lysine isopeptide (Lys-Gly) (interchain with G-Cter in SUMO2) cross-link. Residues 762–775 are compositionally biased toward basic residues; sequence KGSKKQKKHRRARD. Residues 779-789 are compositionally biased toward low complexity; the sequence is SSSSSSQSSHS. At lysine 811 the chain carries N6-acetyllysine. Arginine 845 bears the Asymmetric dimethylarginine mark. The segment covering 848 to 859 has biased composition (low complexity); sequence YSGNNNNNSNND. A Phosphothreonine modification is found at threonine 874. Residues lysine 876 and lysine 879 each participate in a glycyl lysine isopeptide (Lys-Gly) (interchain with G-Cter in SUMO2) cross-link. Residues 881-895 are compositionally biased toward basic and acidic residues; sequence YLHDDREGEGSDKWV. A phosphoserine mark is found at serine 928 and serine 939. The span at 930-940 shows a compositional bias: acidic residues; it reads EEGEIEDDESG.

The protein belongs to the BCLAF1/THRAP3 family. In terms of assembly, associated with the large multiprotein complex TRAP (Mediator complex-like). Interacts with SFPQ; the interaction is dependent on SFPQ phosphorylation at 'Thr-687' and inhibits binding of SFPQ to an ESS1 exonic splicing silencer element-containing RNA. Interacts with NXF1. Component of the SNARP complex which consists at least of SNIP1, SNW1, THRAP3, BCLAF1 and PNN. Associated with spliced mRNP complexes. Interacts with HELZ2 and PPARG. Interacts with CLOCK and BMAL1. Component of a MACOM-like complex, named WTAP complex, composed of WTAP, ZC3H13, CBLL1, KIAA1429, RBM15, BCLAF1 and THRAP3. ADP-ribosylation during genotoxic stress promotes accumulation in nuclear speckles. In terms of tissue distribution, ubiquitous.

Its subcellular location is the nucleus. It is found in the nucleoplasm. It localises to the nucleus speckle. Involved in pre-mRNA splicing. Remains associated with spliced mRNA after splicing which probably involves interactions with the exon junction complex (EJC). Can trigger mRNA decay which seems to be independent of nonsense-mediated decay involving premature stop codons (PTC) recognition. May be involved in nuclear mRNA decay. Involved in regulation of signal-induced alternative splicing. During splicing of PTPRC/CD45 is proposed to sequester phosphorylated SFPQ from PTPRC/CD45 pre-mRNA in resting T-cells. Involved in cyclin-D1/CCND1 mRNA stability probably by acting as component of the SNARP complex which associates with both the 3'end of the CCND1 gene and its mRNA. Involved in response to DNA damage. Is excluced from DNA damage sites in a manner that parallels transcription inhibition; the function may involve the SNARP complex. Initially thought to play a role in transcriptional coactivation through its association with the TRAP complex; however, it is not regarded as a stable Mediator complex subunit. Cooperatively with HELZ2, enhances the transcriptional activation mediated by PPARG, maybe through the stabilization of the PPARG binding to DNA in presence of ligand. May play a role in the terminal stage of adipocyte differentiation. Plays a role in the positive regulation of the circadian clock. Acts as a coactivator of the CLOCK-BMAL1 heterodimer and promotes its transcriptional activator activity and binding to circadian target genes. In Homo sapiens (Human), this protein is Thyroid hormone receptor-associated protein 3.